A 370-amino-acid polypeptide reads, in one-letter code: Ig heavy chain C region (370 aa).

Ig-like domains lie at 40–134, 145–237, and 247–347; these read PTVI…RNIT, PAIK…DSIH, and PSVS…RTVN. 6 N-linked (GlcNAc...) asparagine glycosylation sites follow: Asn-98, Asn-132, Asn-177, Asn-343, Asn-347, and Asn-357.

This Heterodontus francisci (Horn shark) protein is Ig heavy chain C region.